The sequence spans 562 residues: Non-homologous end joining factor IFFO1 (562 aa).

Residues 65–116 form an LMNA binding region; that stretch reads ALRNDLGSNINVLKTLNLRFRCFLAKVHELERRNRLLEKQLQQALEEGKQGR. Residues 73-529 enclose the IF rod domain; it reads NINVLKTLNL…RLITQSGDRK (457 aa). Residues 85–117 are a coiled coil; that stretch reads RCFLAKVHELERRNRLLEKQLQQALEEGKQGRR. The disordered stretch occupies residues 154–187; it reads RVLGSPSRSPAGPLASSAACHTSSSTSTSTAFSS. Low complexity predominate over residues 168–187; the sequence is ASSAACHTSSSTSTSTAFSS. A coiled-coil region spans residues 237 to 301; the sequence is EIRALYNVLA…MKVEQLKAEL (65 aa). Residues 364-401 form a disordered region; it reads MGGRKRERKAAVEEDTSLSESDGPRQPEGAEEESTALS. An XCCR4 binding. Required for localization to the double-strand breaks (DSBs) region spans residues 453 to 528; the sequence is EQEDSLEKVI…RRLITQSGDR (76 aa). Residues 458 to 504 adopt a coiled-coil conformation; it reads LEKVIKDTESLFKTREKEYQETIDQIELELATAKNDMNRHLHEYMEM. A disordered region spans residues 523 to 562; that stretch reads TQSGDRKSPAFTAVPLSDPPPPPSETEDSDRDVSSDSSMR. Residues 553–562 show a composition bias toward basic and acidic residues; it reads RDVSSDSSMR.

This sequence belongs to the intermediate filament family. As to quaternary structure, forms a heterotetramer with XRCC4. The interaction with XRCC4 is direct, involves LIG4-free XRCC4 and leads to relocalization of IFFO1 at the double-strand break (DSB) sites. Interacts with LMNA; the interaction forms an interior nucleoskeleton and the recruitment to DNA double-strand breaks.

It is found in the nucleus. Its subcellular location is the nucleoplasm. The protein resides in the nucleus inner membrane. The protein localises to the nucleus matrix. Nuclear matrix protein involved in the immobilization of broken DNA ends and the suppression of chromosome translocation during DNA double-strand breaks (DSBs). Interacts with the nuclear lamina component LMNA, resulting in the formation of a nucleoskeleton that will relocalize to the DSB sites in a XRCC4-dependent manner and promote the immobilization of the broken ends, thereby preventing chromosome translocation. Acts as a scaffold that allows the DNA repair protein XRCC4 and LMNA to assemble into a complex at the DSB sites. The chain is Non-homologous end joining factor IFFO1 from Mus musculus (Mouse).